We begin with the raw amino-acid sequence, 173 residues long: Lipoprotein signal peptidase (173 aa).

3 helical membrane passes run 9-29 (LPFL…ILVV), 37-57 (VIPV…GAAF), and 70-90 (ILLV…YLKS). Active-site residues include Asp124 and Asp146. Residues 142 to 162 (FNAADSFIVCCGIGLGVNLIL) traverse the membrane as a helical segment.

Belongs to the peptidase A8 family.

It localises to the cell inner membrane. The enzyme catalyses Release of signal peptides from bacterial membrane prolipoproteins. Hydrolyzes -Xaa-Yaa-Zaa-|-(S,diacylglyceryl)Cys-, in which Xaa is hydrophobic (preferably Leu), and Yaa (Ala or Ser) and Zaa (Gly or Ala) have small, neutral side chains.. Its pathway is protein modification; lipoprotein biosynthesis (signal peptide cleavage). Its function is as follows. This protein specifically catalyzes the removal of signal peptides from prolipoproteins. The protein is Lipoprotein signal peptidase of Treponema denticola (strain ATCC 35405 / DSM 14222 / CIP 103919 / JCM 8153 / KCTC 15104).